Consider the following 356-residue polypeptide: Dual-specificity RNA methyltransferase RlmN (356 aa).

E89 acts as the Proton acceptor in catalysis. The Radical SAM core domain occupies S108–D341. A disulfide bridge links C115 with C346. Residues C122, C126, and C129 each coordinate [4Fe-4S] cluster. S-adenosyl-L-methionine is bound by residues G172 to E173, S204, S227 to H229, and N303. C346 acts as the S-methylcysteine intermediate in catalysis.

The protein belongs to the radical SAM superfamily. RlmN family. [4Fe-4S] cluster is required as a cofactor.

Its subcellular location is the cytoplasm. The enzyme catalyses adenosine(2503) in 23S rRNA + 2 reduced [2Fe-2S]-[ferredoxin] + 2 S-adenosyl-L-methionine = 2-methyladenosine(2503) in 23S rRNA + 5'-deoxyadenosine + L-methionine + 2 oxidized [2Fe-2S]-[ferredoxin] + S-adenosyl-L-homocysteine. It carries out the reaction adenosine(37) in tRNA + 2 reduced [2Fe-2S]-[ferredoxin] + 2 S-adenosyl-L-methionine = 2-methyladenosine(37) in tRNA + 5'-deoxyadenosine + L-methionine + 2 oxidized [2Fe-2S]-[ferredoxin] + S-adenosyl-L-homocysteine. Functionally, specifically methylates position 2 of adenine 2503 in 23S rRNA and position 2 of adenine 37 in tRNAs. m2A2503 modification seems to play a crucial role in the proofreading step occurring at the peptidyl transferase center and thus would serve to optimize ribosomal fidelity. The protein is Dual-specificity RNA methyltransferase RlmN of Campylobacter jejuni (strain RM1221).